Reading from the N-terminus, the 381-residue chain is Hps1-dma1 cluster transcription factor tfc7 (381 aa).

Residues 10–37 (CDHCSATKIKCTQERPQCTRCRALGRDC) constitute a DNA-binding region (zn(2)-C6 fungal-type). Residues 41–88 (RSLRAGKPPRSSQGLNRKISNAPVLPRQNTPVSNPTSMSSKPEHWPTM) form a disordered region. Polar residues-rich tracts occupy residues 50–59 (RSSQGLNRKI) and 67–80 (RQNT…SMSS).

It localises to the nucleus. In terms of biological role, transcription factor that regulates the expression of the hps1-dma1 gene cluster that probably mediates the biosynthesis a derivative of cyclopiazonic acid (CPA). Further studies are required to whether the CPA-like hps1-dma1 cluster is functional or a non-functional relic reflecting evolution of D.septosporum. The chain is Hps1-dma1 cluster transcription factor tfc7 (tfc7) from Dothistroma septosporum (strain NZE10 / CBS 128990) (Red band needle blight fungus).